A 433-amino-acid polypeptide reads, in one-letter code: Enolase (433 aa).

S1 is subject to N-acetylserine. S36 and H157 together coordinate (2R)-2-phosphoglycerate. Residue E209 is the Proton donor of the active site. Mn(2+) is bound by residues D244, E294, and D319. Residues K344, R373, and S374 each coordinate (2R)-2-phosphoglycerate. The Proton acceptor role is filled by K344.

Belongs to the enolase family. As to quaternary structure, homodimer. The cofactor is Mg(2+).

It is found in the cytoplasm. The catalysed reaction is (2R)-2-phosphoglycerate = phosphoenolpyruvate + H2O. It participates in carbohydrate degradation; glycolysis; pyruvate from D-glyceraldehyde 3-phosphate: step 4/5. With respect to regulation, inhibited by 2-phosphoglycolic acid. This Homarus gammarus (European lobster) protein is Enolase.